The primary structure comprises 92 residues: UPF0358 protein Exig_1994 (92 aa).

Belongs to the UPF0358 family.

This is UPF0358 protein Exig_1994 from Exiguobacterium sibiricum (strain DSM 17290 / CCUG 55495 / CIP 109462 / JCM 13490 / 255-15).